The sequence spans 748 residues: Catalase-peroxidase (748 aa).

The tryptophyl-tyrosyl-methioninium (Trp-Tyr) (with M-268) cross-link spans 91-242 (WHSAGTYRIG…LAAVQMGLIY (152 aa)). His92 serves as the catalytic Proton acceptor. The disordered stretch occupies residues 194–223 (DRYGKGKGSSSQGEIPADAHRHGQEQARTA). Positions 242–268 (YVNPEGPEGNPDPLAAAHDIRETFARM) form a cross-link, tryptophyl-tyrosyl-methioninium (Tyr-Met) (with W-91). His283 is a heme b binding site. The disordered stretch occupies residues 288 to 310 (THGAGDAKHVGREPEGEDMDSQG). Positions 290–301 (GAGDAKHVGREP) are enriched in basic and acidic residues.

This sequence belongs to the peroxidase family. Peroxidase/catalase subfamily. Homodimer or homotetramer. It depends on heme b as a cofactor. Formation of the three residue Trp-Tyr-Met cross-link is important for the catalase, but not the peroxidase activity of the enzyme.

It catalyses the reaction H2O2 + AH2 = A + 2 H2O. It carries out the reaction 2 H2O2 = O2 + 2 H2O. Bifunctional enzyme with both catalase and broad-spectrum peroxidase activity. The sequence is that of Catalase-peroxidase from Herbaspirillum seropedicae.